A 233-amino-acid chain; its full sequence is Octanoyltransferase (233 aa).

The region spanning 32-213 (NNIDGILLLL…NFKMIFETDL (182 aa)) is the BPL/LPL catalytic domain. Residues 77 to 84 (RGGNVTYH), 144 to 146 (AIG), and 157 to 159 (GFA) each bind substrate. Cys175 acts as the Acyl-thioester intermediate in catalysis.

This sequence belongs to the LipB family.

The protein localises to the cytoplasm. The enzyme catalyses octanoyl-[ACP] + L-lysyl-[protein] = N(6)-octanoyl-L-lysyl-[protein] + holo-[ACP] + H(+). Its pathway is protein modification; protein lipoylation via endogenous pathway; protein N(6)-(lipoyl)lysine from octanoyl-[acyl-carrier-protein]: step 1/2. Functionally, catalyzes the transfer of endogenously produced octanoic acid from octanoyl-acyl-carrier-protein onto the lipoyl domains of lipoate-dependent enzymes. Lipoyl-ACP can also act as a substrate although octanoyl-ACP is likely to be the physiological substrate. The polypeptide is Octanoyltransferase (Clostridium kluyveri (strain ATCC 8527 / DSM 555 / NBRC 12016 / NCIMB 10680 / K1)).